Reading from the N-terminus, the 289-residue chain is 4-hydroxybenzoate octaprenyltransferase (289 aa).

A run of 8 helical transmembrane segments spans residues 21–40, 95–115, 116–136, 138–158, 161–181, 213–233, 236–256, and 268–288; these read PIGTLLLLWPTLWALWLAAG, VLALFAVLALISFALVLTMNS, LTIALSFAALLLAVCYPFMKR, IPIPQLVLGMAFSWSIPMAYA, ANALPLVAWLVFLANLLWTIA, IIGVLQLATLLILLAVGQLMG, AWYYWGLLGAAALFVYQQRLI, and FLNNNYAGALVFIGLVLNYLL.

Belongs to the UbiA prenyltransferase family. Requires Mg(2+) as cofactor.

It is found in the cell inner membrane. It carries out the reaction all-trans-octaprenyl diphosphate + 4-hydroxybenzoate = 4-hydroxy-3-(all-trans-octaprenyl)benzoate + diphosphate. The protein operates within cofactor biosynthesis; ubiquinone biosynthesis. In terms of biological role, catalyzes the prenylation of para-hydroxybenzoate (PHB) with an all-trans polyprenyl group. Mediates the second step in the final reaction sequence of ubiquinone-8 (UQ-8) biosynthesis, which is the condensation of the polyisoprenoid side chain with PHB, generating the first membrane-bound Q intermediate 3-octaprenyl-4-hydroxybenzoate. The polypeptide is 4-hydroxybenzoate octaprenyltransferase (Aeromonas salmonicida (strain A449)).